The primary structure comprises 438 residues: Serine hydroxymethyltransferase (438 aa).

Residues Leu-119 and 123 to 125 (GHL) each bind (6S)-5,6,7,8-tetrahydrofolate. Lys-228 carries the post-translational modification N6-(pyridoxal phosphate)lysine. 370–372 (SPF) is a (6S)-5,6,7,8-tetrahydrofolate binding site.

Belongs to the SHMT family. As to quaternary structure, homodimer. Pyridoxal 5'-phosphate serves as cofactor.

The protein localises to the cytoplasm. The enzyme catalyses (6R)-5,10-methylene-5,6,7,8-tetrahydrofolate + glycine + H2O = (6S)-5,6,7,8-tetrahydrofolate + L-serine. The protein operates within one-carbon metabolism; tetrahydrofolate interconversion. Its pathway is amino-acid biosynthesis; glycine biosynthesis; glycine from L-serine: step 1/1. Its function is as follows. Catalyzes the reversible interconversion of serine and glycine with tetrahydrofolate (THF) serving as the one-carbon carrier. This reaction serves as the major source of one-carbon groups required for the biosynthesis of purines, thymidylate, methionine, and other important biomolecules. Also exhibits THF-independent aldolase activity toward beta-hydroxyamino acids, producing glycine and aldehydes, via a retro-aldol mechanism. This is Serine hydroxymethyltransferase from Pelodictyon phaeoclathratiforme (strain DSM 5477 / BU-1).